The chain runs to 338 residues: Ketol-acid reductoisomerase (NADP(+)) (338 aa).

In terms of domain architecture, KARI N-terminal Rossmann spans 1-181; that stretch reads MQIFYDKDCD…GGGRTGIIET (181 aa). NADP(+)-binding positions include 24-27, R47, S50, S52, and 82-85; these read YGSQ and DEFQ. H107 is an active-site residue. G133 contributes to the NADP(+) binding site. Residues 182–327 form the KARI C-terminal knotted domain; the sequence is SFREETETDL…SKLRAMMPWI (146 aa). D190, E194, E226, and E230 together coordinate Mg(2+). S251 is a substrate binding site.

Belongs to the ketol-acid reductoisomerase family. It depends on Mg(2+) as a cofactor.

It carries out the reaction (2R)-2,3-dihydroxy-3-methylbutanoate + NADP(+) = (2S)-2-acetolactate + NADPH + H(+). The enzyme catalyses (2R,3R)-2,3-dihydroxy-3-methylpentanoate + NADP(+) = (S)-2-ethyl-2-hydroxy-3-oxobutanoate + NADPH + H(+). The protein operates within amino-acid biosynthesis; L-isoleucine biosynthesis; L-isoleucine from 2-oxobutanoate: step 2/4. It functions in the pathway amino-acid biosynthesis; L-valine biosynthesis; L-valine from pyruvate: step 2/4. Involved in the biosynthesis of branched-chain amino acids (BCAA). Catalyzes an alkyl-migration followed by a ketol-acid reduction of (S)-2-acetolactate (S2AL) to yield (R)-2,3-dihydroxy-isovalerate. In the isomerase reaction, S2AL is rearranged via a Mg-dependent methyl migration to produce 3-hydroxy-3-methyl-2-ketobutyrate (HMKB). In the reductase reaction, this 2-ketoacid undergoes a metal-dependent reduction by NADPH to yield (R)-2,3-dihydroxy-isovalerate. This is Ketol-acid reductoisomerase (NADP(+)) from Acinetobacter baylyi (strain ATCC 33305 / BD413 / ADP1).